Reading from the N-terminus, the 341-residue chain is Protein pelota homolog (341 aa).

The protein belongs to the eukaryotic release factor 1 family. Pelota subfamily. Monomer. The cofactor is a divalent metal cation.

The protein localises to the cytoplasm. In terms of biological role, may function in recognizing stalled ribosomes, interact with stem-loop structures in stalled mRNA molecules, and effect endonucleolytic cleavage of the mRNA. May play a role in the release non-functional ribosomes and degradation of damaged mRNAs. Has endoribonuclease activity. The polypeptide is Protein pelota homolog (Sulfurisphaera tokodaii (strain DSM 16993 / JCM 10545 / NBRC 100140 / 7) (Sulfolobus tokodaii)).